Reading from the N-terminus, the 233-residue chain is Aspartate/glutamate leucyltransferase (233 aa).

Belongs to the R-transferase family. Bpt subfamily.

It is found in the cytoplasm. The enzyme catalyses N-terminal L-glutamyl-[protein] + L-leucyl-tRNA(Leu) = N-terminal L-leucyl-L-glutamyl-[protein] + tRNA(Leu) + H(+). It catalyses the reaction N-terminal L-aspartyl-[protein] + L-leucyl-tRNA(Leu) = N-terminal L-leucyl-L-aspartyl-[protein] + tRNA(Leu) + H(+). Its function is as follows. Functions in the N-end rule pathway of protein degradation where it conjugates Leu from its aminoacyl-tRNA to the N-termini of proteins containing an N-terminal aspartate or glutamate. The chain is Aspartate/glutamate leucyltransferase from Vibrio cholerae serotype O1 (strain ATCC 39541 / Classical Ogawa 395 / O395).